A 549-amino-acid chain; its full sequence is Chaperonin GroEL (549 aa).

ATP is bound by residues 30-33, lysine 51, 87-91, glycine 415, 479-481, and aspartate 495; these read TLGP, DGTTT, and NAA.

It belongs to the chaperonin (HSP60) family. As to quaternary structure, forms a cylinder of 14 subunits composed of two heptameric rings stacked back-to-back. Interacts with the co-chaperonin GroES.

It is found in the cytoplasm. The catalysed reaction is ATP + H2O + a folded polypeptide = ADP + phosphate + an unfolded polypeptide.. Functionally, together with its co-chaperonin GroES, plays an essential role in assisting protein folding. The GroEL-GroES system forms a nano-cage that allows encapsulation of the non-native substrate proteins and provides a physical environment optimized to promote and accelerate protein folding. In Stenotrophomonas maltophilia (strain K279a), this protein is Chaperonin GroEL.